The chain runs to 336 residues: tRNA N6-adenosine threonylcarbamoyltransferase (336 aa).

Residues His112 and His116 each coordinate Fe cation. Substrate contacts are provided by residues 136–140 (LVSGG), Asp169, Gly182, and Asn276. Asp304 provides a ligand contact to Fe cation.

The protein belongs to the KAE1 / TsaD family. The cofactor is Fe(2+).

Its subcellular location is the cytoplasm. The catalysed reaction is L-threonylcarbamoyladenylate + adenosine(37) in tRNA = N(6)-L-threonylcarbamoyladenosine(37) in tRNA + AMP + H(+). In terms of biological role, required for the formation of a threonylcarbamoyl group on adenosine at position 37 (t(6)A37) in tRNAs that read codons beginning with adenine. Is involved in the transfer of the threonylcarbamoyl moiety of threonylcarbamoyl-AMP (TC-AMP) to the N6 group of A37, together with TsaE and TsaB. TsaD likely plays a direct catalytic role in this reaction. This Francisella philomiragia subsp. philomiragia (strain ATCC 25017 / CCUG 19701 / FSC 153 / O#319-036) protein is tRNA N6-adenosine threonylcarbamoyltransferase.